Here is a 610-residue protein sequence, read N- to C-terminus: Zinc metalloproteinase-disintegrin-like BITM06A (610 aa).

An N-terminal signal peptide occupies residues 1–20 (MIQVLLVTICLAAFPYQGSS). The propeptide occupies 21 to 189 (IILESGNVND…KKASQLVVTA (169 aa)). In terms of domain architecture, Peptidase M12B spans 198–394 (RYVELFIVVD…ENPQCILNEP (197 aa)). Ca(2+) contacts are provided by Glu-201 and Asp-285. 3 cysteine pairs are disulfide-bonded: Cys-309-Cys-389, Cys-349-Cys-373, and Cys-351-Cys-356. His-334 contributes to the Zn(2+) binding site. Residue Glu-335 is part of the active site. Zn(2+)-binding residues include His-338 and His-344. Asn-372 is a glycosylation site (N-linked (GlcNAc...) asparagine). Ca(2+) is bound by residues Cys-389, Asn-392, Val-404, Asn-407, Leu-409, Glu-411, Glu-414, and Asp-417. The Disintegrin domain occupies 402 to 488 (PPVCGNELLE…ECPADVFHKN (87 aa)). Intrachain disulfides connect Cys-405-Cys-434, Cys-416-Cys-429, Cys-418-Cys-424, Cys-428-Cys-451, Cys-442-Cys-448, Cys-447-Cys-473, Cys-460-Cys-480, Cys-467-Cys-499, Cys-492-Cys-504, Cys-511-Cys-561, Cys-526-Cys-572, Cys-539-Cys-549, Cys-556-Cys-598, and Cys-592-Cys-603. Residues 466 to 468 (ECD) carry the D/ECD-tripeptide motif. Ca(2+) contacts are provided by Asp-468, Pro-469, Glu-471, Asp-483, and Val-484.

It belongs to the venom metalloproteinase (M12B) family. P-III subfamily. P-IIIa sub-subfamily. As to quaternary structure, monomer. The cofactor is Zn(2+). Expressed by the venom gland.

It is found in the secreted. Functionally, snake venom metalloproteinase that impairs hemostasis in the envenomed animal. The polypeptide is Zinc metalloproteinase-disintegrin-like BITM06A (Bothrops insularis (Golden lancehead)).